The sequence spans 354 residues: Probable L-ascorbate-6-phosphate lactonase UlaG (354 aa).

It belongs to the UlaG family. A divalent metal cation is required as a cofactor.

It is found in the cytoplasm. It catalyses the reaction L-ascorbate 6-phosphate + H2O = 3-dehydro-L-gulonate 6-phosphate. It participates in cofactor degradation; L-ascorbate degradation; D-xylulose 5-phosphate from L-ascorbate: step 1/4. In terms of biological role, probably catalyzes the hydrolysis of L-ascorbate-6-P into 3-keto-L-gulonate-6-P. Is essential for L-ascorbate utilization under anaerobic conditions. This is Probable L-ascorbate-6-phosphate lactonase UlaG from Escherichia coli O139:H28 (strain E24377A / ETEC).